Reading from the N-terminus, the 290-residue chain is Bifunctional protein FolD (290 aa).

Residues 174–176, I199, and I240 each bind NADP(+); that span reads GHS.

It belongs to the tetrahydrofolate dehydrogenase/cyclohydrolase family. In terms of assembly, homodimer.

The enzyme catalyses (6R)-5,10-methylene-5,6,7,8-tetrahydrofolate + NADP(+) = (6R)-5,10-methenyltetrahydrofolate + NADPH. It carries out the reaction (6R)-5,10-methenyltetrahydrofolate + H2O = (6R)-10-formyltetrahydrofolate + H(+). Its pathway is one-carbon metabolism; tetrahydrofolate interconversion. Catalyzes the oxidation of 5,10-methylenetetrahydrofolate to 5,10-methenyltetrahydrofolate and then the hydrolysis of 5,10-methenyltetrahydrofolate to 10-formyltetrahydrofolate. The polypeptide is Bifunctional protein FolD (Methanosarcina acetivorans (strain ATCC 35395 / DSM 2834 / JCM 12185 / C2A)).